Here is a 244-residue protein sequence, read N- to C-terminus: Monothiol glutaredoxin-4 (244 aa).

The 105-residue stretch at 2–106 (SVEITFVEQF…LKAAIDEYIQ (105 aa)) folds into the Thioredoxin domain. A Glutaredoxin domain is found at 147–244 (NERLSTLTNA…NGELQEMLPN (98 aa)). Glutathione is bound at residue Lys164. Cys172 provides a ligand contact to [2Fe-2S] cluster. Residues 201–205 (RQGLK) and 226–227 (LD) each bind glutathione.

It belongs to the glutaredoxin family. Monothiol subfamily. As to quaternary structure, homodimer. Interacts with php4.

The protein resides in the cytoplasm. Its subcellular location is the nucleus. Functionally, monothiol glutaredoxin involved in the biogenesis of iron-sulfur clusters. Binds one iron-sulfur cluster per dimer. The iron-sulfur cluster is bound between subunits, and is complexed by a bound glutathione and a cysteine residue from each subunit. The polypeptide is Monothiol glutaredoxin-4 (grx4) (Schizosaccharomyces pombe (strain 972 / ATCC 24843) (Fission yeast)).